Here is a 259-residue protein sequence, read N- to C-terminus: Hydroxyacylglutathione hydrolase (259 aa).

Residues His-56, His-58, Asp-60, His-61, His-112, Asp-133, and His-171 each coordinate Zn(2+). The span at 224–238 shows a compositional bias: basic and acidic residues; sequence RTRETSVKEKADERS. The tract at residues 224–245 is disordered; that stretch reads RTRETSVKEKADERSSGQNTSQ.

The protein belongs to the metallo-beta-lactamase superfamily. Glyoxalase II family. Monomer. Requires Zn(2+) as cofactor.

The enzyme catalyses an S-(2-hydroxyacyl)glutathione + H2O = a 2-hydroxy carboxylate + glutathione + H(+). It functions in the pathway secondary metabolite metabolism; methylglyoxal degradation; (R)-lactate from methylglyoxal: step 2/2. Functionally, thiolesterase that catalyzes the hydrolysis of S-D-lactoyl-glutathione to form glutathione and D-lactic acid. The polypeptide is Hydroxyacylglutathione hydrolase (Pseudomonas savastanoi pv. phaseolicola (strain 1448A / Race 6) (Pseudomonas syringae pv. phaseolicola (strain 1448A / Race 6))).